Reading from the N-terminus, the 56-residue chain is Large ribosomal subunit protein uL30 (56 aa).

Belongs to the universal ribosomal protein uL30 family. Part of the 50S ribosomal subunit.

This Nitratidesulfovibrio vulgaris (strain DSM 19637 / Miyazaki F) (Desulfovibrio vulgaris) protein is Large ribosomal subunit protein uL30.